The following is a 257-amino-acid chain: 14-3-3-like protein GF14-G (257 aa).

Belongs to the 14-3-3 family.

Functionally, is associated with a DNA binding complex that binds to the G box, a well-characterized cis-acting DNA regulatory element found in plant genes. In Oryza sativa subsp. japonica (Rice), this protein is 14-3-3-like protein GF14-G (GF14G).